Consider the following 107-residue polypeptide: Glutaconyl-CoA decarboxylase subunit delta (107 aa).

Residues 10–32 form a helical membrane-spanning segment; that stretch reads MINMTIVFGVLIVLGILMVLIHA. Positions 37–60 are disordered; the sequence is KKVQGKKKPVVAKPAPSAAASKRQ. Positions 47 to 57 are enriched in low complexity; the sequence is VAKPAPSAAAS.

Belongs to the OadG family. Heterooctamer consisting of two alpha, two beta, two gamma and two delta subunits.

The protein localises to the cell membrane. It catalyses the reaction (2E)-glutaconyl-CoA + Na(+)(in) + H(+) = (2E)-butenoyl-CoA + Na(+)(out) + CO2. It functions in the pathway amino-acid degradation; L-glutamate degradation via hydroxyglutarate pathway; crotonoyl-CoA from L-glutamate: step 5/5. Its function is as follows. Part of the primary sodium pump glutaconyl-CoA decarboxylase (GCD). Possible membrane anchor for the alpha subunit. The sequence is that of Glutaconyl-CoA decarboxylase subunit delta (gcdD) from Acidaminococcus fermentans (strain ATCC 25085 / DSM 20731 / CCUG 9996 / CIP 106432 / VR4).